The primary structure comprises 425 residues: Serine--tRNA ligase (425 aa).

An L-serine-binding site is contributed by 233-235; the sequence is TAE. An ATP-binding site is contributed by 264 to 266; that stretch reads RAE. Glu287 is an L-serine binding site. Position 351–354 (351–354) interacts with ATP; the sequence is EISS. Residue Ser387 participates in L-serine binding.

The protein belongs to the class-II aminoacyl-tRNA synthetase family. Type-1 seryl-tRNA synthetase subfamily. As to quaternary structure, homodimer. The tRNA molecule binds across the dimer.

The protein localises to the cytoplasm. The enzyme catalyses tRNA(Ser) + L-serine + ATP = L-seryl-tRNA(Ser) + AMP + diphosphate + H(+). It carries out the reaction tRNA(Sec) + L-serine + ATP = L-seryl-tRNA(Sec) + AMP + diphosphate + H(+). Its pathway is aminoacyl-tRNA biosynthesis; selenocysteinyl-tRNA(Sec) biosynthesis; L-seryl-tRNA(Sec) from L-serine and tRNA(Sec): step 1/1. Functionally, catalyzes the attachment of serine to tRNA(Ser). Is also able to aminoacylate tRNA(Sec) with serine, to form the misacylated tRNA L-seryl-tRNA(Sec), which will be further converted into selenocysteinyl-tRNA(Sec). The chain is Serine--tRNA ligase from Clostridium perfringens (strain 13 / Type A).